The chain runs to 278 residues: MQIIHTIQELRAWRKNAGTVAFVPTMGNLHEGHLALVREAKKRADNVVVSIFVNRLQFGQGEDFDKYPRTLQQDADKLEAEGVAVVFAPDEKELYPNVEQRYNVEPPNLQNELCGKFRPGHFLGVATVVSKLFNIVAPDVACFGKKDYQQLAVIKGLTEDLNFDVEIVPVDTGRAEDGLALSSRNQYLSAAERDEAPRLYRELKAVAESLAQGSLDYAGLEKRAVQSLTEYGWVVDYVEIRRVDTLEVARAGDKKLVVLAAARLGTTRLIDNLEIKLP.

M26–H33 serves as a coordination point for ATP. Catalysis depends on H33, which acts as the Proton donor. Q57 provides a ligand contact to (R)-pantoate. Residue Q57 participates in beta-alanine binding. G144–D147 is an ATP binding site. Q150 contributes to the (R)-pantoate binding site. ATP-binding positions include G173 and L181–R184.

This sequence belongs to the pantothenate synthetase family. In terms of assembly, homodimer.

Its subcellular location is the cytoplasm. It carries out the reaction (R)-pantoate + beta-alanine + ATP = (R)-pantothenate + AMP + diphosphate + H(+). The protein operates within cofactor biosynthesis; (R)-pantothenate biosynthesis; (R)-pantothenate from (R)-pantoate and beta-alanine: step 1/1. In terms of biological role, catalyzes the condensation of pantoate with beta-alanine in an ATP-dependent reaction via a pantoyl-adenylate intermediate. The sequence is that of Pantothenate synthetase from Neisseria meningitidis serogroup A / serotype 4A (strain DSM 15465 / Z2491).